Here is a 1407-residue protein sequence, read N- to C-terminus: DNA-directed RNA polymerase subunit beta' (1407 aa).

The Zn(2+) site is built by C70, C72, C85, and C88. 3 residues coordinate Mg(2+): D460, D462, and D464. Zn(2+) is bound by residues C814, C888, C895, and C898.

This sequence belongs to the RNA polymerase beta' chain family. As to quaternary structure, the RNAP catalytic core consists of 2 alpha, 1 beta, 1 beta' and 1 omega subunit. When a sigma factor is associated with the core the holoenzyme is formed, which can initiate transcription. Requires Mg(2+) as cofactor. It depends on Zn(2+) as a cofactor.

The enzyme catalyses RNA(n) + a ribonucleoside 5'-triphosphate = RNA(n+1) + diphosphate. DNA-dependent RNA polymerase catalyzes the transcription of DNA into RNA using the four ribonucleoside triphosphates as substrates. In Salmonella choleraesuis (strain SC-B67), this protein is DNA-directed RNA polymerase subunit beta'.